Reading from the N-terminus, the 90-residue chain is Accessory gland-specific peptide 26Ab (90 aa).

The signal sequence occupies residues 1–21 (MNYFAVLCIFSCICLWQFSDA).

Main cells of the accessory glands of males.

The protein localises to the secreted. The protein resides in the extracellular space. This protein is transferred from male to female during mating and may affect egglaying and behavior after mating. This chain is Accessory gland-specific peptide 26Ab (Acp26Ab), found in Drosophila mauritiana (Fruit fly).